The following is a 215-amino-acid chain: Chaperone protein TorD (215 aa).

This sequence belongs to the TorD/DmsD family. TorD subfamily.

Its subcellular location is the cytoplasm. In terms of biological role, involved in the biogenesis of TorA. Acts on TorA before the insertion of the molybdenum cofactor and, as a result, probably favors a conformation of the apoenzyme that is competent for acquiring the cofactor. In Vibrio vulnificus (strain YJ016), this protein is Chaperone protein TorD.